A 135-amino-acid polypeptide reads, in one-letter code: Salivary protein 15 (135 aa).

The first 21 residues, 1-21, serve as a signal peptide directing secretion; that stretch reads MESFVAMKVVCILFLVGVVAA. N-linked (GlcNAc...) asparagine glycosylation is present at N22. The tract at residues 48-67 is required for Borrelia OspC-binding; it reads PNYISNHQKLALKLLKICKD. N92 and N104 each carry an N-linked (GlcNAc...) asparagine glycan. Residues 116–135 form a CD4-binding region; sequence GPNGQTCAEKNKCVGHIPGC.

This sequence belongs to the salp15 family. In terms of assembly, monomer. Interacts with host CD4. Interacts with host DC-SIGN (CD209). (Microbial infection) Interacts with Borrelia outer surface protein C (OspC). In terms of processing, glycosylated. Expressed in salivary glands. Detected in host skin, at the site of natural inoculation.

The protein resides in the secreted. In terms of biological role, salivary tick protein that downregulates host immune system by binding to both dendritic cells, and CD4(+) T cells. Specifically binds to the CD4 coreceptor on T cells. This interaction prevents the activation of the Src kinase, Lck, and its downstream substrate Zap-70, and results in deficient activation of PLCgamma1, the repression of calcium fluxes triggered by T-cell antigen receptor (TCR) ligation, and a subsequent reduction in interleukin-2 production. This salivary protein also binds to DC-SIGN (CD209) on dendritic cells (DC) and activates the Raf-1 kinase/MEK signaling pathway that results in down-regulating expression of pro-inflammatory cytokines. Furthermore, it inhibits T cell proliferation induced by DCs. It also inhibits in vitro keratinocyte inflammation induced by Borrelia burgdorferi or by the major outer surface protein (OspC) of Borrelia. In addition, it downregulates chemokines and monocyte chemoattractant protein 1, as well as several antimicrobial peptides such as defensins, cathelicidin, psoriasin, and RNase 7. Apart from its immunomodulatory activities, it is also associated with protection of Borrelia spirochetes from antibody-mediated killing through its binding to OspC. In vivo, tests on different immune disease animal models show promising therapeutic results, e.g., in inhibiting HIV infection, experimental autoimmune encephalomyelitis, transplantation rejection, and asthma. (Microbial infection) Protects Borrelia garinii (strains A87S and VSBP) from host complement-mediated killing. Functionally, (Microbial infection) Partially protects Borrelia burgdorferi (strains VS215 and B31) from host complement-mediated killing. This Ixodes scapularis (Black-legged tick) protein is Salivary protein 15.